The sequence spans 842 residues: TATA box-binding protein-associated factor, RNA polymerase I, subunit C (842 aa).

Disordered stretches follow at residues 574–605 (SSLR…PSWT), 667–690 (RPGD…QQDE), and 702–842 (QAAA…RMGF). The segment covering 577–588 (REPDHPAPERPA) has biased composition (basic and acidic residues). Over residues 745–760 (DASSAPHSQDLSNSEA) the composition is skewed to polar residues. Over residues 783–794 (QHERRQTLRDYM) the composition is skewed to basic and acidic residues. Phosphothreonine is present on threonine 808. The span at 809 to 826 (PPSQTSSRQTRSFRQQTP) shows a compositional bias: low complexity. Positions 833–842 (PPRKKPRMGF) are enriched in basic residues.

As to quaternary structure, component of the transcription factor SL1/TIF-IB complex, composed of TBP and at least TAF1A, TAF1B, TAF1C and TAF1D. In the complex interacts directly with TBP, TAF1A and TAF1B. Interaction of the SL1/TIF-IB subunits with TBP excludes interaction of TBP with the transcription factor IID (TFIID) subunits. Interacts with MYC and RRN3. Interacts with p53/TP53; the interaction prevents the association of SL1/TIF-IB with UBTF and represses RNA polymerase I transcription. Part of Pol I pre-initiation complex (PIC), in which Pol I core assembles with RRN3 and promoter-bound UTBF and SL1/TIF-IB complex.

It localises to the nucleus. The protein localises to the nucleolus. In terms of biological role, component of the transcription factor SL1/TIF-IB complex, which is involved in the assembly of the PIC (pre-initiation complex) during RNA polymerase I-dependent transcription. The rate of PIC formation probably is primarily dependent on the rate of association of SL1/TIF-IB with the rDNA promoter. SL1/TIF-IB is involved in stabilization of nucleolar transcription factor 1/UBTF on rDNA. Formation of SL1/TIF-IB excludes the association of TBP with TFIID subunits. Recruits RNA polymerase I to the rRNA gene promoter via interaction with RRN3. This is TATA box-binding protein-associated factor, RNA polymerase I, subunit C (Taf1c) from Rattus norvegicus (Rat).